The sequence spans 216 residues: uncharacterized protein (216 aa).

Positions 55 to 216 (NEDKAEAMSN…NEKEKDVNPK (162 aa)) are disordered. 3 stretches are compositionally biased toward basic and acidic residues: residues 134–152 (LTEK…DNHV), 177–187 (KINDKSDDTLH), and 207–216 (NEKEKDVNPK).

This is an uncharacterized protein from Caenorhabditis elegans.